Reading from the N-terminus, the 203-residue chain is Large ribosomal subunit protein bL25 (203 aa).

Belongs to the bacterial ribosomal protein bL25 family. CTC subfamily. In terms of assembly, part of the 50S ribosomal subunit; part of the 5S rRNA/L5/L18/L25 subcomplex. Contacts the 5S rRNA. Binds to the 5S rRNA independently of L5 and L18.

Its function is as follows. This is one of the proteins that binds to the 5S RNA in the ribosome where it forms part of the central protuberance. The chain is Large ribosomal subunit protein bL25 from Paraburkholderia phymatum (strain DSM 17167 / CIP 108236 / LMG 21445 / STM815) (Burkholderia phymatum).